A 149-amino-acid polypeptide reads, in one-letter code: 3-dehydroquinate dehydratase (149 aa).

The active-site Proton acceptor is tyrosine 26. The substrate site is built by asparagine 75, histidine 81, and aspartate 88. Histidine 101 functions as the Proton donor in the catalytic mechanism. Residues 102 to 103 (LS) and arginine 112 contribute to the substrate site.

The protein belongs to the type-II 3-dehydroquinase family. In terms of assembly, homododecamer.

It catalyses the reaction 3-dehydroquinate = 3-dehydroshikimate + H2O. The protein operates within metabolic intermediate biosynthesis; chorismate biosynthesis; chorismate from D-erythrose 4-phosphate and phosphoenolpyruvate: step 3/7. Catalyzes a trans-dehydration via an enolate intermediate. The protein is 3-dehydroquinate dehydratase of Shewanella woodyi (strain ATCC 51908 / MS32).